Reading from the N-terminus, the 217-residue chain is Probable GTP-binding protein EngB (217 aa).

The region spanning 37–214 is the EngB-type G domain; the sequence is AGIEVAFAGR…RAAMIRLLDE (178 aa). GTP contacts are provided by residues 45 to 52, 72 to 76, 92 to 95, 159 to 162, and 193 to 195; these read GRSNVGKS, GRTQE, DMPG, TKAD, and TSS. Mg(2+) is bound by residues Ser-52 and Thr-74.

Belongs to the TRAFAC class TrmE-Era-EngA-EngB-Septin-like GTPase superfamily. EngB GTPase family. Mg(2+) is required as a cofactor.

In terms of biological role, necessary for normal cell division and for the maintenance of normal septation. This Rhodopseudomonas palustris (strain BisB5) protein is Probable GTP-binding protein EngB.